Consider the following 34-residue polypeptide: Conotoxin Cl6d (34 aa).

Disulfide bonds link C4–C19, C12–C29, and C18–C33. 2 positions are modified to 4-hydroxyproline: P14 and P21.

In terms of tissue distribution, expressed by the venom duct.

It is found in the secreted. The polypeptide is Conotoxin Cl6d (Californiconus californicus (California cone)).